Consider the following 511-residue polypeptide: Cytochrome P450 monooxygenase esdpI (511 aa).

A helical transmembrane segment spans residues 14–34 (VRAGLAIGVAILAIIVLFPGI). Cys-453 serves as a coordination point for heme.

This sequence belongs to the cytochrome P450 family. Heme is required as a cofactor.

The protein resides in the membrane. It participates in secondary metabolite biosynthesis; terpenoid biosynthesis. In terms of biological role, cytochrome P450 monooxygenase; part of the cluster that mediates the biosynthesis of shearones, diterpenoid pyrones (DPs) which are structurally diverse meroterpenoids consisting of a diterpene linked by a pyrone, and which may exhibit a range of bioactivities. Whitin the pathway, esdpI takes part in the molecular scaffold modification via the hydroxylation at C-20 and can transform shearone C into shearone G. The molecular scaffold is commonly biosynthesized by a series of enzymes including the non-reducing polyketide synthase (NR-PKS) esdpA that generates an alpha-pyrone; the prenyltransferase esdpC that attaches a geranylgeranyl pyrophosphate (GGPP) produced by the GGPP synthase (GGPPS) esdpD onto the pyrone unit; the FAD-dependent monooxygenase esdpE that converts an olefin on the diterpene unit into an epoxide; and the terpene cyclase esdpB that catalyzes the cyclization reactions to give the molecular backbone shearone A. In the modification steps, esdpF oxidizes the hydroxy group to a ketone at C-3 and esdpG then attaches hydroxy groups at both C-11 and C-12. After that, esdpI hydroxylates at C-20 and esdpH hydroxylates at C-6'. The ether bridge is generated by nucleophilic attack of the hydroxy group at C-20 to the carbonyl carbon at C-3. EsdpH can also functions prior to esdpI. The different combinations of these modification enzymes lead to the production of diverse shearone derivatives, shearone I being the end product of the pathway. The alpha-ketoglutarate-dependent dioxygenase esdpJ seems not to be involved in this pathway. The chain is Cytochrome P450 monooxygenase esdpI from Penicillium shearii (Eupenicillium shearii).